Consider the following 216-residue polypeptide: Uracil phosphoribosyltransferase (216 aa).

5-phospho-alpha-D-ribose 1-diphosphate-binding positions include R85, R110, and 135 to 143 (DPMVATGYS). Residues I200 and 205–207 (GDA) contribute to the uracil site. D206 serves as a coordination point for 5-phospho-alpha-D-ribose 1-diphosphate.

Belongs to the UPRTase family. Mg(2+) is required as a cofactor.

It catalyses the reaction UMP + diphosphate = 5-phospho-alpha-D-ribose 1-diphosphate + uracil. Its pathway is pyrimidine metabolism; UMP biosynthesis via salvage pathway; UMP from uracil: step 1/1. Allosterically activated by GTP. Catalyzes the conversion of uracil and 5-phospho-alpha-D-ribose 1-diphosphate (PRPP) to UMP and diphosphate. This is Uracil phosphoribosyltransferase from Burkholderia cenocepacia (strain ATCC BAA-245 / DSM 16553 / LMG 16656 / NCTC 13227 / J2315 / CF5610) (Burkholderia cepacia (strain J2315)).